Reading from the N-terminus, the 99-residue chain is Large ribosomal subunit protein bL27 (99 aa).

A propeptide spanning residues 1–10 (MKLIFDIQLF) is cleaved from the precursor.

This sequence belongs to the bacterial ribosomal protein bL27 family. In terms of processing, the N-terminus is cleaved by ribosomal processing cysteine protease Prp.

This chain is Large ribosomal subunit protein bL27, found in Caldicellulosiruptor bescii (strain ATCC BAA-1888 / DSM 6725 / KCTC 15123 / Z-1320) (Anaerocellum thermophilum).